The following is a 22-amino-acid chain: Mu-conotoxin SxIIIA (22 aa).

3 disulfide bridges follow: Cys2-Cys15, Cys3-Cys20, and Cys10-Cys21. Residue Ala22 is modified to Alanine amide.

The protein belongs to the conotoxin M superfamily. Expressed by the venom duct.

It is found in the secreted. In terms of biological role, mu-conotoxins block voltage-gated sodium channels (Nav). This synthetic toxin potently blocks rNav1.4/SCN4A (IC(50)= 7 nM). It also moderately blocks rNav1.1/SCN1A (IC(50)=370 nM), rNav1.2/SCN2A (IC(50)=1 uM), and mNav1.6/SCN6A (IC(50)=570 nM). It is noteworthy that coexpression of subunits beta-2 or beta-4 (but not beta-1 or beta-3) decrease by more that 10-fold the binding potency of the toxin to rNav1.6. It is also noteworthy that the toxin is 50-fold more potent on mouse Nav1.6 than on rat Nav1.6. In vivo, when injected intraperitoneally or subcutaneously in mice, causes motor impairment, paralysis and death. The protein is Mu-conotoxin SxIIIA of Conus striolatus (Cone snail).